The sequence spans 254 residues: Fluoride-specific ion channel FluC 1 (254 aa).

A run of 3 helical transmembrane segments spans residues 19-39 (LDIL…TALY), 51-71 (IIGM…YGSV), and 80-100 (AFLI…VAVL). Na(+) is bound by residues Gly58 and Ser61.

The protein belongs to the fluoride channel Fluc/FEX (TC 1.A.43) family.

It localises to the cell inner membrane. The enzyme catalyses fluoride(in) = fluoride(out). Its activity is regulated as follows. Na(+) is not transported, but it plays an essential structural role and its presence is essential for fluoride channel function. In terms of biological role, fluoride-specific ion channel. Important for reducing fluoride concentration in the cell, thus reducing its toxicity. The polypeptide is Fluoride-specific ion channel FluC 1 (Brucella suis biovar 1 (strain 1330)).